Consider the following 446-residue polypeptide: Putative zinc metalloprotease NMA0084 (446 aa).

H18 provides a ligand contact to Zn(2+). E19 is a catalytic residue. Position 22 (H22) interacts with Zn(2+). 3 consecutive transmembrane segments (helical) span residues 93–115 (IAIV…GLSF), 376–398 (FLAL…LDGG), and 419–438 (NIGL…VAFF). The region spanning 100 to 181 (PLTNLALAVL…KVAVGVQTAS (82 aa)) is the PDZ domain.

The protein belongs to the peptidase M50B family. It depends on Zn(2+) as a cofactor.

It is found in the cell inner membrane. The protein is Putative zinc metalloprotease NMA0084 of Neisseria meningitidis serogroup A / serotype 4A (strain DSM 15465 / Z2491).